The sequence spans 146 residues: Leghemoglobin 1 (146 aa).

Residues 2–146 (GFTEKQEALV…LAAAIKKAMG (145 aa)) form the Globin domain. Tyr-29 bears the Nitrated tyrosine mark. Ser-44 provides a ligand contact to heme b. Ser-44 carries the post-translational modification Phosphoserine. O2 is bound at residue His-61. The heme b site is built by Lys-64, His-93, and Lys-96. Nitrated tyrosine is present on Tyr-134.

The protein belongs to the plant globin family. As to quaternary structure, monomer. In terms of processing, nitrated in effective nodules and particularly in hypoxic conditions; this mechanism may play a protective role in the symbiosis by buffering toxic peroxynitrite NO(2)(-). Nitration level decrease during nodule senescence. Phosphorylation at Ser-44 disrupts the molecular environment of its porphyrin ring oxygen binding pocket, thus leading to a reduced oxygen consumption and to the delivery of oxygen O(2) to symbiosomes. Root nodules.

It localises to the cytoplasm. It is found in the cytosol. The protein localises to the nucleus. Its function is as follows. Leghemoglobin that reversibly binds oxygen O(2) through a pentacoordinated heme iron. In root nodules, facilitates the diffusion of oxygen to the bacteroids while preventing the bacterial nitrogenase from being inactivated by buffering dioxygen, nitric oxide and carbon monoxide, and promoting the formation of reactive oxygen species (ROS, e.g. H(2)O(2)). This role is essential for symbiotic nitrogen fixation (SNF). This is Leghemoglobin 1 from Medicago truncatula (Barrel medic).